The sequence spans 193 residues: 7-methyl-GTP pyrophosphatase (193 aa).

The active-site Proton acceptor is the Asp70.

The protein belongs to the Maf family. YceF subfamily. It depends on a divalent metal cation as a cofactor.

It localises to the cytoplasm. The catalysed reaction is N(7)-methyl-GTP + H2O = N(7)-methyl-GMP + diphosphate + H(+). Its function is as follows. Nucleoside triphosphate pyrophosphatase that hydrolyzes 7-methyl-GTP (m(7)GTP). May have a dual role in cell division arrest and in preventing the incorporation of modified nucleotides into cellular nucleic acids. The polypeptide is 7-methyl-GTP pyrophosphatase (Photobacterium profundum (strain SS9)).